The chain runs to 365 residues: Putrescine 2-hydroxylase (365 aa).

The Rieske domain maps to 44 to 141 (GHELMVPEVG…LQNWNGLLFE (98 aa)). Positions 81, 83, 100, and 103 each coordinate [2Fe-2S] cluster.

This sequence belongs to the bacterial ring-hydroxylating dioxygenase alpha subunit family. It depends on [2Fe-2S] cluster as a cofactor.

In terms of biological role, rieske-type iron sulfur protein that can catalyze in vitro the 2-hydroxylation of putrescine, forming 2-hydroxyputrescine. May be involved in the biosynthesis of the cyclic hydroxamate siderophore alcaligin. This chain is Putrescine 2-hydroxylase, found in Ralstonia nicotianae (strain ATCC BAA-1114 / GMI1000) (Ralstonia solanacearum).